A 211-amino-acid polypeptide reads, in one-letter code: Ribonuclease MRP protein subunit rmp1 (211 aa).

A helical transmembrane segment spans residues 73–93 (PALGLVLLGILARVWFVMGGI). Ser156 carries the phosphoserine modification. Residues 178-211 (SQGTKRKSKNSNSTVKKKKKRARKGRDEIDDIFG) are disordered. Over residues 181 to 201 (TKRKSKNSNSTVKKKKKRARK) the composition is skewed to basic residues.

In terms of assembly, component of RNase MRP complex which consists of an RNA moiety and at least 10 protein subunits.

The protein localises to the membrane. Its subcellular location is the nucleus. It localises to the nucleolus. Functionally, functions as part of ribonuclease MRP (RNase MRP), which is involved in rRNA processing in mitochondria. This Schizosaccharomyces pombe (strain 972 / ATCC 24843) (Fission yeast) protein is Ribonuclease MRP protein subunit rmp1.